We begin with the raw amino-acid sequence, 2727 residues long: E3 ubiquitin-protein ligase Ufd4 (2727 aa).

Disordered regions lie at residues 247–271 (THSS…TNSD) and 365–389 (RGSN…TDRT). Over residues 365–374 (RGSNNPNQGQ) the composition is skewed to polar residues. ANK repeat units lie at residues 422-451 (VGQT…DVNK), 453-482 (QRSS…YPDL), and 486-518 (DGKT…WMSP). Residues 682 to 702 (AQRSSTSVVVAPRPTSDDPME) are disordered. The MIB/HERC2 domain maps to 1322 to 1392 (QIRAQLKHMT…KYDLKLADCE (71 aa)). Composition is skewed to polar residues over residues 1401 to 1430 (QSMG…STPS) and 1437 to 1448 (KNQNPEGASNQT). Disordered regions lie at residues 1401-1448 (QSMG…SNQT), 1483-1512 (NTSS…GPSP), 1570-1592 (ESVT…REND), 1845-1871 (YPSL…QQSA), 1905-1930 (ALLG…DEYE), and 2092-2115 (STCL…ASTL). Over residues 1575–1592 (SQSSSHPDVQSSSPREND) the composition is skewed to low complexity. Acidic residues predominate over residues 1909 to 1930 (DLDDEDDMDEDNDEEENEDEYE). Polar residues predominate over residues 2104-2115 (PDVSSKSGASTL). Residues 2289 to 2727 (RKSVLEVEFL…ATKEKGFHLN (439 aa)) form the HECT domain. Residue Cys-2696 is the Glycyl thioester intermediate of the active site.

It belongs to the UPL family. K-HECT subfamily.

The catalysed reaction is S-ubiquitinyl-[E2 ubiquitin-conjugating enzyme]-L-cysteine + [acceptor protein]-L-lysine = [E2 ubiquitin-conjugating enzyme]-L-cysteine + N(6)-ubiquitinyl-[acceptor protein]-L-lysine.. It participates in protein modification; protein ubiquitination. In terms of biological role, E3 ubiquitin-protein ligase which accepts ubiquitin from an E2 ubiquitin-conjugating enzyme in the form of a thioester and then directly transfers the ubiquitin to targeted substrates. Involved in the negative regulation of the Ras/MAPK signaling pathway in the wing by acting with the E2 enzyme Unc6 and the putative E3 ligases poe and Kcmf1 to mediate the ubiquitination and proteasomal degradation of rl/MAPK. The chain is E3 ubiquitin-protein ligase Ufd4 from Drosophila melanogaster (Fruit fly).